We begin with the raw amino-acid sequence, 146 residues long: Large ribosomal subunit protein bL19 (146 aa).

Positions 116-146 (ADRKRIDQDRAAERAAKEEAQKAQEPKASQE) are disordered. Basic and acidic residues predominate over residues 119–146 (KRIDQDRAAERAAKEEAQKAQEPKASQE).

As to quaternary structure, part of the 50S risobomal subunit. Contacts protein L14. Forms a bridge to the 30S subunit in the 70S ribosome, contacting the 16S rRNA.

Functionally, contacts the 16S rRNA of the 30S subunit (part of bridge B6), connecting the 2 subunits. This is Large ribosomal subunit protein bL19 (rplS) from Thermus thermophilus (strain ATCC 27634 / DSM 579 / HB8).